The primary structure comprises 95 residues: Protein TusB (95 aa).

This sequence belongs to the DsrH/TusB family. Heterohexamer, formed by a dimer of trimers. The hexameric TusBCD complex contains 2 copies each of TusB, TusC and TusD. The TusBCD complex interacts with TusE.

It is found in the cytoplasm. Its function is as follows. Part of a sulfur-relay system required for 2-thiolation of 5-methylaminomethyl-2-thiouridine (mnm(5)s(2)U) at tRNA wobble positions. The chain is Protein TusB from Enterobacter sp. (strain 638).